We begin with the raw amino-acid sequence, 142 residues long: Putative pre-16S rRNA nuclease (142 aa).

Belongs to the YqgF nuclease family.

It is found in the cytoplasm. Its function is as follows. Could be a nuclease involved in processing of the 5'-end of pre-16S rRNA. This is Putative pre-16S rRNA nuclease from Chlorobaculum tepidum (strain ATCC 49652 / DSM 12025 / NBRC 103806 / TLS) (Chlorobium tepidum).